The sequence spans 1280 residues: SET and MYND domain-containing protein DDB_G0284059 (1280 aa).

Disordered stretches follow at residues 1–35 and 111–167; these read MTKK…SHNH and INKI…QKQQ. 2 stretches are compositionally biased toward low complexity: residues 16-25 and 117-153; these read NNNNNNNHGN and ENSP…QSQP. 2 TPR repeats span residues 272–305 and 383–416; these read SKGY…YDME and HKLY…IEKR. A coiled-coil region spans residues 439–468; it reads QKDEEIEQELDNKNNNSNDDEKQQQQQQQQ. Residues Cys533, Cys536, Cys546, Cys549, Cys555, Cys559, His568, and Cys572 each coordinate Zn(2+). The MYND-type zinc-finger motif lies at 533–572; it reads CYNCFKEILSPIYCKECSNSQYCSNKCLNEDYVKQHGREC. Disordered regions lie at residues 601 to 642, 659 to 726, 854 to 905, and 1039 to 1079; these read ANKG…QNLN, ALSS…TTTT, QQQQ…PFSP, and AKLQ…LNNN. Composition is skewed to low complexity over residues 659 to 697, 712 to 726, 854 to 898, 1042 to 1053, and 1061 to 1079; these read ALSS…SLTE, SSSS…TTTT, QQQQ…QNPP, QQQQQQQQQHQQ, and NSNP…LNNN. The 144-residue stretch at 822–965 folds into the SET domain; sequence CQLTTYTFAI…KGEEILGCYG (144 aa). The TPR 3 repeat unit spans residues 1218–1251; the sequence is GREYSKLGQIYLTLGEIEKSEDAIEKAESILMSW.

It belongs to the class V-like SAM-binding methyltransferase superfamily.

Probable methyltransferase. The polypeptide is SET and MYND domain-containing protein DDB_G0284059 (Dictyostelium discoideum (Social amoeba)).